A 267-amino-acid chain; its full sequence is Hydroxynaphthalene reductase-like protein Arp2 (267 aa).

Ile-25, Asn-45, Asp-71, and Asn-98 together coordinate NADP(+). Residues Ser-147 and Ser-148 each act as proton donor in the active site. Positions 162, 166, 195, and 197 each coordinate NADP(+). Tyr-162 acts as the Proton acceptor in catalysis. The active-site Lowers pKa of active site Tyr is Lys-166.

It belongs to the short-chain dehydrogenases/reductases (SDR) family.

Functionally, hydroxynaphthalene reductase-like protein; part of the Pks2 gene cluster that mediates the formation of infectious structures (appressoria), enabling these fungi to kill insects faster. The product of the Pks2 gene cluster is different from the one of Pks1 and has still not been identified. The sequence is that of Hydroxynaphthalene reductase-like protein Arp2 from Metarhizium anisopliae (strain ARSEF 549).